Here is a 492-residue protein sequence, read N- to C-terminus: Probable beta-1,4-xylosyltransferase IRX14H (492 aa).

The Cytoplasmic portion of the chain corresponds to 1–33 (MKLSVFRLSYWNRRGSSFRSSPSLDPSFDGKSP). A helical; Signal-anchor for type II membrane protein membrane pass occupies residues 34–54 (SSVFWFVIHGLCCLISLILGF). The Lumenal portion of the chain corresponds to 55 to 492 (RFSHLVLFFL…FDGVKVSATS (438 aa)). N-linked (GlcNAc...) asparagine glycans are attached at residues N99, N196, and N314. The disordered stretch occupies residues 457–492 (IKEAKSNSKPRVSKSKSYKEKQEPKAFDGVKVSATS). Residues 473–484 (SYKEKQEPKAFD) are compositionally biased toward basic and acidic residues.

The protein belongs to the glycosyltransferase 43 family. In terms of tissue distribution, expressed in developing interfascicular fibers and xylem cells in stems and developing secondary xylem in roots.

The protein resides in the golgi apparatus membrane. Its function is as follows. Involved in the synthesis of the hemicellulose glucuronoxylan, a major component of secondary cell walls. Probably involved in the elongation of glucuronoxylan xylosyl backbone. This chain is Probable beta-1,4-xylosyltransferase IRX14H (IRX14H), found in Arabidopsis thaliana (Mouse-ear cress).